The following is a 184-amino-acid chain: Probable chorismate pyruvate-lyase 1 (184 aa).

Residues arginine 70, leucine 108, and glutamate 166 each contribute to the substrate site.

The protein belongs to the UbiC family.

It localises to the cytoplasm. The catalysed reaction is chorismate = 4-hydroxybenzoate + pyruvate. It participates in cofactor biosynthesis; ubiquinone biosynthesis. Removes the pyruvyl group from chorismate, with concomitant aromatization of the ring, to provide 4-hydroxybenzoate (4HB) for the ubiquinone pathway. The protein is Probable chorismate pyruvate-lyase 1 of Burkholderia pseudomallei (strain 1710b).